Reading from the N-terminus, the 67-residue chain is uncharacterized protein (67 aa).

The chain crosses the membrane as a helical span at residues C26–F46.

Belongs to the plectrovirus ORF11 family.

The protein localises to the host membrane. This is an uncharacterized protein from Spiroplasma virus SpV1-C74 (SpV1).